A 477-amino-acid polypeptide reads, in one-letter code: Bifunctional protein HldE (477 aa).

The interval 1–318 (MKVTLSEFER…ENAVRGRADT (318 aa)) is ribokinase. Position 179 is an N6-acetyllysine (lysine 179). Residue 195 to 198 (NLSE) coordinates ATP. Residue aspartate 264 is part of the active site. The segment at 344 to 477 (MTNGVFDILH…IKKIQQDKKG (134 aa)) is cytidylyltransferase.

This sequence in the N-terminal section; belongs to the carbohydrate kinase PfkB family. In the C-terminal section; belongs to the cytidylyltransferase family. Homodimer.

The catalysed reaction is D-glycero-beta-D-manno-heptose 7-phosphate + ATP = D-glycero-beta-D-manno-heptose 1,7-bisphosphate + ADP + H(+). It catalyses the reaction D-glycero-beta-D-manno-heptose 1-phosphate + ATP + H(+) = ADP-D-glycero-beta-D-manno-heptose + diphosphate. The protein operates within nucleotide-sugar biosynthesis; ADP-L-glycero-beta-D-manno-heptose biosynthesis; ADP-L-glycero-beta-D-manno-heptose from D-glycero-beta-D-manno-heptose 7-phosphate: step 1/4. Its pathway is nucleotide-sugar biosynthesis; ADP-L-glycero-beta-D-manno-heptose biosynthesis; ADP-L-glycero-beta-D-manno-heptose from D-glycero-beta-D-manno-heptose 7-phosphate: step 3/4. In terms of biological role, catalyzes the phosphorylation of D-glycero-D-manno-heptose 7-phosphate at the C-1 position to selectively form D-glycero-beta-D-manno-heptose-1,7-bisphosphate. Its function is as follows. Catalyzes the ADP transfer from ATP to D-glycero-beta-D-manno-heptose 1-phosphate, yielding ADP-D-glycero-beta-D-manno-heptose. This Shigella boydii serotype 18 (strain CDC 3083-94 / BS512) protein is Bifunctional protein HldE.